A 508-amino-acid chain; its full sequence is Phosphoenolpyruvate carboxylase (508 aa).

The protein belongs to the PEPCase type 2 family. In terms of assembly, homotetramer. The cofactor is Mg(2+).

The enzyme catalyses oxaloacetate + phosphate = phosphoenolpyruvate + hydrogencarbonate. Functionally, catalyzes the irreversible beta-carboxylation of phosphoenolpyruvate (PEP) to form oxaloacetate (OAA), a four-carbon dicarboxylic acid source for the tricarboxylic acid cycle. This Picrophilus torridus (strain ATCC 700027 / DSM 9790 / JCM 10055 / NBRC 100828 / KAW 2/3) protein is Phosphoenolpyruvate carboxylase.